A 437-amino-acid polypeptide reads, in one-letter code: Ribosomal protein uS12 methylthiotransferase RimO (437 aa).

The MTTase N-terminal domain maps to 4-114; sequence PRISFVSLGC…VIEAVHTAIP (111 aa). Cys13, Cys49, Cys78, Cys145, Cys149, and Cys152 together coordinate [4Fe-4S] cluster. Residues 131–369 enclose the Radical SAM core domain; the sequence is LTPRHYAYLK…MAKQQQISTH (239 aa). The region spanning 372-437 is the TRAM domain; sequence KKKIGKRLQV…DAYDLYGIAV (66 aa).

This sequence belongs to the methylthiotransferase family. RimO subfamily. [4Fe-4S] cluster serves as cofactor.

The protein localises to the cytoplasm. It catalyses the reaction L-aspartate(89)-[ribosomal protein uS12]-hydrogen + (sulfur carrier)-SH + AH2 + 2 S-adenosyl-L-methionine = 3-methylsulfanyl-L-aspartate(89)-[ribosomal protein uS12]-hydrogen + (sulfur carrier)-H + 5'-deoxyadenosine + L-methionine + A + S-adenosyl-L-homocysteine + 2 H(+). Catalyzes the methylthiolation of an aspartic acid residue of ribosomal protein uS12. The protein is Ribosomal protein uS12 methylthiotransferase RimO of Bartonella tribocorum (strain CIP 105476 / IBS 506).